Here is a 664-residue protein sequence, read N- to C-terminus: MPEEKNTFYITTPIYYPSGKAHIGHAYTTVAGDAMARYKRLKGYDVFYLTGTDEHGQKIQAKAKERGISEQEYVDEIAEGFQELWKKLEISNTDFIRTTQDRHKTSVEKIFEQLLEQGDIYLGEYEGWYSVSDEEYFTETQLEEVYKDENGKVIGGKAPSGNEVELVKEESYFFRMSKYADRLVEYYNSHPEFILPESRKNEMINNFIKPGLEDLAVSRTTFDWGIKVPGNPKHVVYVWIDALSNYITALGYNTDNDTKFQKYWPADVQIVGKEIVRFHTIYWPIMLMALDLPLPKMVFGHGWILMKDGKMSKSKGNVVDPYMLIDRYGLDALRYYLLREVPFGSDGLFTPEDFVDRVNFDLANDLGNLLNRTVAMINKYFDGEIPAYQGNVTEFDQILVDFKNNVVKEYEGSMDHMQFSVALNQLWSLISRTNKYIDETAPWALAKDEDKRTELASVMTHLAENLRIIAVLLQPFLTRTPGEIFLQLGLQEENLKKWDSIYGYGEIPAGTTVVKKGTPIFPRLDAEVEVTYIQDEMKGSAPAPAEEVAEVEALETPQIGIEDFDKIDLRVAEVKQVDKVKKADKLLCFQLDLGEGKLRQVLSGIAEFYQPEELIGKKVIVVSNLKPVKLRGLMSEGMILSGEKDGKLSVIEASSALPNGAKVK.

Residues Y15–H25 carry the 'HIGH' region motif. The 'KMSKS' region motif lies at K310–S314. K313 provides a ligand contact to ATP. The region spanning D563–K664 is the tRNA-binding domain.

The protein belongs to the class-I aminoacyl-tRNA synthetase family. MetG type 2B subfamily. As to quaternary structure, homodimer.

It localises to the cytoplasm. The catalysed reaction is tRNA(Met) + L-methionine + ATP = L-methionyl-tRNA(Met) + AMP + diphosphate. Functionally, is required not only for elongation of protein synthesis but also for the initiation of all mRNA translation through initiator tRNA(fMet) aminoacylation. This chain is Methionine--tRNA ligase (metG), found in Listeria monocytogenes serovar 1/2a (strain ATCC BAA-679 / EGD-e).